We begin with the raw amino-acid sequence, 348 residues long: Rhodopsin (348 aa).

Topologically, residues 1-33 (TEGPYFYVPMVNTTGIVRSPYEYPQYYLVNPAA) are extracellular. N12 carries N-linked (GlcNAc...) asparagine glycosylation. Residues 34–58 (FAILGAYMFFLIIVGFPVNFMTLYV) form a helical membrane-spanning segment. Over 59-70 (TLEHKKLRTPLN) the chain is Cytoplasmic. A helical transmembrane segment spans residues 71–93 (YILLNLAVADLFMVIGGFTTTMY). The Extracellular segment spans residues 94–107 (TSMHGYFVLGRLGC). A disulfide bridge connects residues C107 and C184. The chain crosses the membrane as a helical span at residues 108–130 (NLEGFFATLGGMISLWSLAVLAI). The short motif at 131–133 (ERW) is the 'Ionic lock' involved in activated form stabilization element. Over 131–149 (ERWVVVCKPISNFRFGENH) the chain is Cytoplasmic. The helical transmembrane segment at 150–170 (AIMGVSLTWGMALACTVPPLV) threads the bilayer. The Extracellular portion of the chain corresponds to 171–199 (GWSRYIPEGMQCSCGIDYYTRAEGFNNET). The N-linked (GlcNAc...) asparagine glycan is linked to N197. The helical transmembrane segment at 200-221 (FVLYMFCCHFTVPLTIIFFCYG) threads the bilayer. Residues 222–249 (RLLCAVKEAAAAQQESETTQRAEREVTR) lie on the Cytoplasmic side of the membrane. The helical transmembrane segment at 250–271 (MVVIMVIGFLVCWLPYASVAWF) threads the bilayer. The Extracellular portion of the chain corresponds to 272 to 283 (VFTHQGSEFGPL). Residues 284 to 305 (FMTIPAFFAKSSAIYNPMIYIC) form a helical membrane-spanning segment. K293 carries the N6-(retinylidene)lysine modification. The Cytoplasmic portion of the chain corresponds to 306–348 (MNKQFRHCMITTLFCGKNPFEGEEEGASSTKTEASSASSVSPA). C320 carries S-palmitoyl cysteine lipidation. The segment at 327–348 (GEEEGASSTKTEASSASSVSPA) is disordered. Residues 332–348 (ASSTKTEASSASSVSPA) show a composition bias toward low complexity.

Belongs to the G-protein coupled receptor 1 family. Opsin subfamily. Post-translationally, phosphorylated on some or all of the serine and threonine residues present in the C-terminal region. Contains one covalently linked retinal chromophore.

Its subcellular location is the membrane. The protein resides in the cell projection. The protein localises to the cilium. It localises to the photoreceptor outer segment. Its function is as follows. Photoreceptor required for image-forming vision at low light intensity. While most salt water fish species use retinal as chromophore, most freshwater fish use 3-dehydroretinal, or a mixture of retinal and 3-dehydroretinal. Light-induced isomerization of 11-cis to all-trans retinal triggers a conformational change that activates signaling via G-proteins. Subsequent receptor phosphorylation mediates displacement of the bound G-protein alpha subunit by arrestin and terminates signaling. This chain is Rhodopsin (rho), found in Sargocentron xantherythrum (Hawaiian squirrelfish).